Reading from the N-terminus, the 691-residue chain is Elongation factor G (691 aa).

One can recognise a tr-type G domain in the interval 12–286; the sequence is KKLRNIGIMA…GILEYLPSPL (275 aa). GTP contacts are provided by residues 21-28, 85-89, and 139-142; these read AHIDAGKT, DTPGH, and NKMD.

The protein belongs to the TRAFAC class translation factor GTPase superfamily. Classic translation factor GTPase family. EF-G/EF-2 subfamily.

The protein localises to the cytoplasm. Its function is as follows. Catalyzes the GTP-dependent ribosomal translocation step during translation elongation. During this step, the ribosome changes from the pre-translocational (PRE) to the post-translocational (POST) state as the newly formed A-site-bound peptidyl-tRNA and P-site-bound deacylated tRNA move to the P and E sites, respectively. Catalyzes the coordinated movement of the two tRNA molecules, the mRNA and conformational changes in the ribosome. This is Elongation factor G from Thermosipho africanus (strain TCF52B).